The following is a 133-amino-acid chain: Small ribosomal subunit protein uS8 (133 aa).

It belongs to the universal ribosomal protein uS8 family. Part of the 30S ribosomal subunit. Contacts proteins S5 and S12.

One of the primary rRNA binding proteins, it binds directly to 16S rRNA central domain where it helps coordinate assembly of the platform of the 30S subunit. The polypeptide is Small ribosomal subunit protein uS8 (Thermosynechococcus vestitus (strain NIES-2133 / IAM M-273 / BP-1)).